We begin with the raw amino-acid sequence, 299 residues long: 4-diphosphocytidyl-2-C-methyl-D-erythritol kinase (299 aa).

Residue K33 is part of the active site. 115–125 lines the ATP pocket; that stretch reads PLASGLGGGSS. D154 is a catalytic residue.

This sequence belongs to the GHMP kinase family. IspE subfamily.

The enzyme catalyses 4-CDP-2-C-methyl-D-erythritol + ATP = 4-CDP-2-C-methyl-D-erythritol 2-phosphate + ADP + H(+). It functions in the pathway isoprenoid biosynthesis; isopentenyl diphosphate biosynthesis via DXP pathway; isopentenyl diphosphate from 1-deoxy-D-xylulose 5-phosphate: step 3/6. Its function is as follows. Catalyzes the phosphorylation of the position 2 hydroxy group of 4-diphosphocytidyl-2C-methyl-D-erythritol. The protein is 4-diphosphocytidyl-2-C-methyl-D-erythritol kinase of Deinococcus geothermalis (strain DSM 11300 / CIP 105573 / AG-3a).